A 464-amino-acid chain; its full sequence is MATMVPTEFDTIAAISTPPGEGAISIVRLSGEDAVKIANKVFKGKNLEKVPTHTINYGHIVNPKTNEELDEVMVSVMLAPRTFTREDVIEINCHGGIVPTNQILQLLLSNGARLAEPGEFTKRAFLHGRIDLTQAESVMDLIRAKTDRSMKVALNQLDGNLSHLIRNLRQDILDVLAQVEVNIDYPEYDDVETLTTKMLREKAIEVKKSIQQLLTTAKQGKVLREGLATAIVGRPNVGKSSLLNHLLHEDKAIVTDIAGTTRDVIEEYVNVRGVPLKLIDTAGIRETEDKVERIGVERSRKAIEQADLVMLVLNASEELTDEDKELIQATSGKKRIVILNKTDLPQKLNMDEVRELVPEDELITTSVLKKTGVDKLEEKIAELFFGGIENSQSTIMVTNARHIALLNQAEDSLDAVLQGLDSGMPVDLCQIDMTNAWDELGEITGDSYQDELLTQLFSQFCLGK.

3 residues coordinate (6S)-5-formyl-5,6,7,8-tetrahydrofolate: R28, E90, and R129. Positions 226 to 385 (GLATAIVGRP…LEEKIAELFF (160 aa)) constitute a TrmE-type G domain. Position 236 (N236) interacts with K(+). GTP contacts are provided by residues 236–241 (NVGKSS), 255–261 (TDIAGTT), and 280–283 (DTAG). S240 contributes to the Mg(2+) binding site. T255, I257, and T260 together coordinate K(+). T261 contributes to the Mg(2+) binding site. K464 is a (6S)-5-formyl-5,6,7,8-tetrahydrofolate binding site.

This sequence belongs to the TRAFAC class TrmE-Era-EngA-EngB-Septin-like GTPase superfamily. TrmE GTPase family. Homodimer. Heterotetramer of two MnmE and two MnmG subunits. Requires K(+) as cofactor.

It localises to the cytoplasm. Its function is as follows. Exhibits a very high intrinsic GTPase hydrolysis rate. Involved in the addition of a carboxymethylaminomethyl (cmnm) group at the wobble position (U34) of certain tRNAs, forming tRNA-cmnm(5)s(2)U34. The chain is tRNA modification GTPase MnmE from Ligilactobacillus salivarius (strain UCC118) (Lactobacillus salivarius).